The sequence spans 127 residues: Holotricin-2 (127 aa).

Positions 1-15 (MMKLVIALCLIGISA) are cleaved as a signal peptide. The propeptide occupies 16 to 55 (AYVVPVYYEIYPEDATFDEADIEPQLSPAELHHGSIRERR). Residues 43 to 84 (PAELHHGSIRERRSLQPGAPSFPMPGSQLPTSVSGNVEKQGR) form a disordered region. Residues 45–56 (ELHHGSIRERRS) show a composition bias toward basic and acidic residues. The span at 70-84 (QLPTSVSGNVEKQGR) shows a compositional bias: polar residues.

The protein belongs to the coleoptericin family. Hemolymph.

It is found in the secreted. Its function is as follows. Antibacterial activity against Gram-negative bacteria but not against Gram-positive bacteria. This Holotrichia diomphalia (Korean black chafer) protein is Holotricin-2.